We begin with the raw amino-acid sequence, 341 residues long: MSTTADKIAVLGAGSWGTALASLLARHGHPTVLWGRDAAMVEAIDQRHENPRYLPGIPLPDSLRATTDLASAVEGAAWILVVTPSHAFGETVRALAPLRPAGAGVAWATKGFEPGSGRFLHEVAREVLGEDVPLAVVTGPSFAKEVTQGLPTAITVHGDVPEFAQTVAEAMHGPAFRAYTGDDMVGAELGGAMKNVLAVATGVADGMQLGLNARAGLITRGLNEMLRLAAAIGAKPETLMGLAGLGDLVLTCTGDLSRNRRLGLALGRGQTLQDAVREIGQVVESVQTADEVMRQARRHGIDLPISDRVRAVLHGEQTPEEGLRALLAREQKPEYPDTLFK.

Residues S15, W16, R36, and K110 each contribute to the NADPH site. Residues K110, G139, and S141 each coordinate sn-glycerol 3-phosphate. A143 contacts NADPH. 5 residues coordinate sn-glycerol 3-phosphate: K194, D247, S257, R258, and N259. K194 functions as the Proton acceptor in the catalytic mechanism. R258 is an NADPH binding site. NADPH-binding residues include V282 and E284.

It belongs to the NAD-dependent glycerol-3-phosphate dehydrogenase family.

Its subcellular location is the cytoplasm. It catalyses the reaction sn-glycerol 3-phosphate + NAD(+) = dihydroxyacetone phosphate + NADH + H(+). The enzyme catalyses sn-glycerol 3-phosphate + NADP(+) = dihydroxyacetone phosphate + NADPH + H(+). Its pathway is membrane lipid metabolism; glycerophospholipid metabolism. Its function is as follows. Catalyzes the reduction of the glycolytic intermediate dihydroxyacetone phosphate (DHAP) to sn-glycerol 3-phosphate (G3P), the key precursor for phospholipid synthesis. The chain is Glycerol-3-phosphate dehydrogenase [NAD(P)+] from Stenotrophomonas maltophilia (strain R551-3).